We begin with the raw amino-acid sequence, 165 residues long: Inorganic pyrophosphatase (165 aa).

Residues Lys-21, Arg-35, and Tyr-47 each coordinate substrate. Residues Asp-57, Asp-62, and Asp-94 each coordinate Mg(2+). A substrate-binding site is contributed by Tyr-131.

It belongs to the PPase family. In terms of assembly, homohexamer. Requires Mg(2+) as cofactor.

It localises to the cytoplasm. It catalyses the reaction diphosphate + H2O = 2 phosphate + H(+). In terms of biological role, catalyzes the hydrolysis of inorganic pyrophosphate (PPi) forming two phosphate ions. This Geobacillus stearothermophilus (Bacillus stearothermophilus) protein is Inorganic pyrophosphatase.